We begin with the raw amino-acid sequence, 538 residues long: Chaperonin GroEL (538 aa).

ATP contacts are provided by residues 30–33, 87–91, Gly415, 479–481, and Asp495; these read TLGP, DGTTT, and DAA.

The protein belongs to the chaperonin (HSP60) family. In terms of assembly, forms a cylinder of 14 subunits composed of two heptameric rings stacked back-to-back. Interacts with the co-chaperonin GroES.

Its subcellular location is the cytoplasm. The catalysed reaction is ATP + H2O + a folded polypeptide = ADP + phosphate + an unfolded polypeptide.. In terms of biological role, together with its co-chaperonin GroES, plays an essential role in assisting protein folding. The GroEL-GroES system forms a nano-cage that allows encapsulation of the non-native substrate proteins and provides a physical environment optimized to promote and accelerate protein folding. This chain is Chaperonin GroEL, found in Dictyoglomus turgidum (strain DSM 6724 / Z-1310).